The chain runs to 349 residues: MNREELFDVTVIGGGPAGLYSAFYSGLREMKTKIIEFQPQLGGKIHVYPEKMIWDVGGLLPVTGDKLIEQLVQQGLTFQPEVVLNTKVESIIRNKDGTFTLKANDGKEHFSKTVIVATGSGILKPQKLSIEGAERFEVSNLNYTVKSLKRFKDKTIIISGGGNSAVDWANELEPIAKKVYVTYRKEELSGHEAQVKQLLNSSAECFFHTSITKLIAGDSHEAIEYVELTNHETGEVSHLLIDEVIINHGYERDITLLENSELDVAIIDNFYIAGNANSESSVDGLYAAGDILKHEGKLHLIAGAFQDAGNAVNKAKQFIQPDASEYGMVSSHNEVFKKRNRELIKQMMK.

Glu36, Lys44, Tyr48, Val88, Leu123, Asp290, and Ser331 together coordinate FAD.

This sequence belongs to the ferredoxin--NADP reductase type 2 family. As to quaternary structure, homodimer. Requires FAD as cofactor.

The enzyme catalyses 2 reduced [2Fe-2S]-[ferredoxin] + NADP(+) + H(+) = 2 oxidized [2Fe-2S]-[ferredoxin] + NADPH. The sequence is that of Ferredoxin--NADP reductase 1 from Bacillus cereus (strain ATCC 10987 / NRS 248).